The chain runs to 394 residues: S-adenosylmethionine synthase 2 (394 aa).

Glu11 contributes to the Mg(2+) binding site. An ATP-binding site is contributed by His17. Glu45 is a binding site for K(+). 2 residues coordinate L-methionine: Glu58 and Gln101. Residues 169–171 (DGK), 237–240 (SGRF), Asp248, 254–255 (RK), Ala271, Lys275, and Lys279 contribute to the ATP site. Asp248 is a binding site for L-methionine. An L-methionine-binding site is contributed by Lys279.

The protein belongs to the AdoMet synthase family. Homotetramer. Requires Mn(2+) as cofactor. The cofactor is Mg(2+). Co(2+) is required as a cofactor. K(+) serves as cofactor.

It is found in the cytoplasm. It carries out the reaction L-methionine + ATP + H2O = S-adenosyl-L-methionine + phosphate + diphosphate. The protein operates within amino-acid biosynthesis; S-adenosyl-L-methionine biosynthesis; S-adenosyl-L-methionine from L-methionine: step 1/1. Catalyzes the formation of S-adenosylmethionine from methionine and ATP. The reaction comprises two steps that are both catalyzed by the same enzyme: formation of S-adenosylmethionine (AdoMet) and triphosphate, and subsequent hydrolysis of the triphosphate. The chain is S-adenosylmethionine synthase 2 (SAM2) from Hordeum vulgare (Barley).